A 404-amino-acid chain; its full sequence is Probable tRNA sulfurtransferase (404 aa).

One can recognise a THUMP domain in the interval 60-165; it reads QPVVEALKLV…DEAAYISYEE (106 aa). ATP-binding positions include 183–184, 208–209, Arg-265, Gly-287, and Gln-296; these read ML and HF.

Belongs to the ThiI family.

The protein resides in the cytoplasm. It carries out the reaction [ThiI sulfur-carrier protein]-S-sulfanyl-L-cysteine + a uridine in tRNA + 2 reduced [2Fe-2S]-[ferredoxin] + ATP + H(+) = [ThiI sulfur-carrier protein]-L-cysteine + a 4-thiouridine in tRNA + 2 oxidized [2Fe-2S]-[ferredoxin] + AMP + diphosphate. It catalyses the reaction [ThiS sulfur-carrier protein]-C-terminal Gly-Gly-AMP + S-sulfanyl-L-cysteinyl-[cysteine desulfurase] + AH2 = [ThiS sulfur-carrier protein]-C-terminal-Gly-aminoethanethioate + L-cysteinyl-[cysteine desulfurase] + A + AMP + 2 H(+). Its pathway is cofactor biosynthesis; thiamine diphosphate biosynthesis. In terms of biological role, catalyzes the ATP-dependent transfer of a sulfur to tRNA to produce 4-thiouridine in position 8 of tRNAs, which functions as a near-UV photosensor. Also catalyzes the transfer of sulfur to the sulfur carrier protein ThiS, forming ThiS-thiocarboxylate. This is a step in the synthesis of thiazole, in the thiamine biosynthesis pathway. The sulfur is donated as persulfide by IscS. The protein is Probable tRNA sulfurtransferase of Streptococcus pyogenes serotype M5 (strain Manfredo).